The sequence spans 614 residues: GPI transamidase component GAA1 (614 aa).

Topologically, residues 1–19 (MALLEKLHRRIVDMGLVPR) are cytoplasmic. The chain crosses the membrane as a helical span at residues 20–40 (IIALLPVISMLCALFGFISIA). The Lumenal portion of the chain corresponds to 41-356 (ILPMDGQYRR…APRQFVSISS (316 aa)). An N-linked (GlcNAc...) asparagine glycan is attached at asparagine 87. Residues 357–377 (YLPSAVALSIAFAISSLNAFI) traverse the membrane as a helical segment. Topologically, residues 378–394 (NNAYANISLFSEYNLVA) are cytoplasmic. A helical membrane pass occupies residues 395–415 (LLVWFVSLVISFVVSQAFLLI). Residues 416-464 (PSSGLLMTISMASCFLPLILSRKIHISEPLSYRLKNVAFLYFSLVSTSL) are Lumenal-facing. The helical transmembrane segment at 465–485 (LMINFAMALLIGTLAFPMTFV) threads the bilayer. Residues 486-535 (KTIVESSSEHEVTTQSSNPIKTEPKDEIELVENHMDTTPATPQQQKQKLK) lie on the Cytoplasmic side of the membrane. Residues 536–556 (NLVLLILTNPFISITLFGLFF) form a helical membrane-spanning segment. Topologically, residues 557–577 (DDEFHGFDIINKLVSAWLDLK) are lumenal. The chain crosses the membrane as a helical span at residues 578 to 598 (CWSWFVLCIGWLPCWLLILAS). Residues 599–614 (SFESKSVVVRSKEKQS) are Cytoplasmic-facing. The Prevents secretion from ER signature appears at 610-614 (KEKQS).

In terms of assembly, forms a complex with CDC91, GPI17, GPI16 and GPI8.

The protein localises to the endoplasmic reticulum membrane. Its pathway is glycolipid biosynthesis; glycosylphosphatidylinositol-anchor biosynthesis. Component of the GPI transamidase complex. Required for a terminal step of GPI anchor attachment onto proteins. Affects endocytosis. The polypeptide is GPI transamidase component GAA1 (GAA1) (Saccharomyces cerevisiae (strain ATCC 204508 / S288c) (Baker's yeast)).